A 164-amino-acid polypeptide reads, in one-letter code: uncharacterized protein (164 aa).

A chloroplast-targeting transit peptide spans 1–60; sequence MERSASVGVNDGRFGGNQFYSPSFSSSSSSSSMRHVNYSCGSCGYELNLSSTNRITSTIG.

The protein localises to the plastid. It is found in the chloroplast. This is an uncharacterized protein from Arabidopsis thaliana (Mouse-ear cress).